The following is a 100-amino-acid chain: Urease subunit gamma (100 aa).

The protein belongs to the urease gamma subunit family. Heterotrimer of UreA (gamma), UreB (beta) and UreC (alpha) subunits. Three heterotrimers associate to form the active enzyme.

It is found in the cytoplasm. It catalyses the reaction urea + 2 H2O + H(+) = hydrogencarbonate + 2 NH4(+). Its pathway is nitrogen metabolism; urea degradation; CO(2) and NH(3) from urea (urease route): step 1/1. In Burkholderia mallei (strain NCTC 10247), this protein is Urease subunit gamma.